The following is a 105-amino-acid chain: Putative membrane protein insertion efficiency factor (105 aa).

The protein belongs to the UPF0161 family.

The protein localises to the cell inner membrane. Functionally, could be involved in insertion of integral membrane proteins into the membrane. This is Putative membrane protein insertion efficiency factor from Nitratidesulfovibrio vulgaris (strain DSM 19637 / Miyazaki F) (Desulfovibrio vulgaris).